Consider the following 880-residue polypeptide: Protein translocase subunit SecA (880 aa).

Residues Gln-86, Gly-104–Thr-108, and Asp-511 each bind ATP. A disordered region spans residues Ala-837 to Lys-871. The segment covering Gln-841–Arg-860 has biased composition (basic and acidic residues). Residues Cys-864, Cys-866, Cys-875, and Cys-876 each coordinate Zn(2+).

It belongs to the SecA family. In terms of assembly, monomer and homodimer. Part of the essential Sec protein translocation apparatus which comprises SecA, SecYEG and auxiliary proteins SecDF. Other proteins may also be involved. It depends on Zn(2+) as a cofactor.

The protein localises to the cell inner membrane. It localises to the cytoplasm. The enzyme catalyses ATP + H2O + cellular proteinSide 1 = ADP + phosphate + cellular proteinSide 2.. Part of the Sec protein translocase complex. Interacts with the SecYEG preprotein conducting channel. Has a central role in coupling the hydrolysis of ATP to the transfer of proteins into and across the cell membrane, serving as an ATP-driven molecular motor driving the stepwise translocation of polypeptide chains across the membrane. The chain is Protein translocase subunit SecA from Thermodesulfovibrio yellowstonii (strain ATCC 51303 / DSM 11347 / YP87).